Reading from the N-terminus, the 385-residue chain is Leucine aminopeptidase 1 (385 aa).

Positions 1–14 (MKFLTLALSATATA) are cleaved as a signal peptide. Residues 15–85 (MIIVNPEQQP…YGTLHTTRVV (71 aa)) constitute a propeptide that is removed on maturation. Positions 185, 204, 243, and 270 each coordinate Zn(2+). A disulfide bridge links Cys-319 with Cys-323. His-352 provides a ligand contact to Zn(2+).

It belongs to the peptidase M28 family. M28E subfamily. In terms of assembly, monomer. Zn(2+) is required as a cofactor.

The protein localises to the secreted. Its function is as follows. Extracellular aminopeptidase that allows assimilation of proteinaceous substrates. The polypeptide is Leucine aminopeptidase 1 (lap1) (Penicillium rubens (strain ATCC 28089 / DSM 1075 / NRRL 1951 / Wisconsin 54-1255) (Penicillium chrysogenum)).